We begin with the raw amino-acid sequence, 388 residues long: Putative C-&gt;U-editing enzyme APOBEC-4 (388 aa).

The CMP/dCMP-type deaminase domain maps to 60–176 (PQTKHLTFYE…AWNREALRGL (117 aa)). Position 92 (His92) interacts with Zn(2+). Glu94 functions as the Proton donor in the catalytic mechanism. Residues Cys126 and Cys133 each coordinate Zn(2+). The segment at 322–356 (KVKALRKSPSGRPVKKEEARKGSTRSQEANETNKS) is disordered.

Belongs to the cytidine and deoxycytidylate deaminase family. Zn(2+) is required as a cofactor.

Putative C to U editing enzyme whose physiological substrate is not yet known. In Rattus norvegicus (Rat), this protein is Putative C-&gt;U-editing enzyme APOBEC-4 (Apobec4).